A 235-amino-acid polypeptide reads, in one-letter code: Small ribosomal subunit protein uS3 (235 aa).

Residues 39-107 (IRDFIKKECH…ELHLNIVEVR (69 aa)) form the KH type-2 domain. The tract at residues 213-235 (AARDRKAQELQDGPAPRGAGGRR) is disordered.

This sequence belongs to the universal ribosomal protein uS3 family. As to quaternary structure, part of the 30S ribosomal subunit. Forms a tight complex with proteins S10 and S14.

Functionally, binds the lower part of the 30S subunit head. Binds mRNA in the 70S ribosome, positioning it for translation. This is Small ribosomal subunit protein uS3 from Roseobacter denitrificans (strain ATCC 33942 / OCh 114) (Erythrobacter sp. (strain OCh 114)).